Reading from the N-terminus, the 124-residue chain is Small ribosomal subunit protein uS13 (124 aa).

The segment at 99–124 is disordered; that stretch reads RGQRTRTNARTRKGPRKTVGVMRKKS. Residues 101–124 show a composition bias toward basic residues; it reads QRTRTNARTRKGPRKTVGVMRKKS.

This sequence belongs to the universal ribosomal protein uS13 family. In terms of assembly, part of the 30S ribosomal subunit. Forms a loose heterodimer with protein S19. Forms two bridges to the 50S subunit in the 70S ribosome.

In terms of biological role, located at the top of the head of the 30S subunit, it contacts several helices of the 16S rRNA. In the 70S ribosome it contacts the 23S rRNA (bridge B1a) and protein L5 of the 50S subunit (bridge B1b), connecting the 2 subunits; these bridges are implicated in subunit movement. Contacts the tRNAs in the A and P-sites. This Caldicellulosiruptor saccharolyticus (strain ATCC 43494 / DSM 8903 / Tp8T 6331) protein is Small ribosomal subunit protein uS13.